Here is a 155-residue protein sequence, read N- to C-terminus: Ribonuclease H (155 aa).

Positions 1–142 (MLKQVEIFTD…CDELARAAAM (142 aa)) constitute an RNase H type-1 domain. Residues Asp10, Glu48, Asp70, and Asp134 each coordinate Mg(2+).

Belongs to the RNase H family. As to quaternary structure, monomer. Requires Mg(2+) as cofactor.

The protein resides in the cytoplasm. The enzyme catalyses Endonucleolytic cleavage to 5'-phosphomonoester.. Endonuclease that specifically degrades the RNA of RNA-DNA hybrids. This chain is Ribonuclease H, found in Escherichia fergusonii (strain ATCC 35469 / DSM 13698 / CCUG 18766 / IAM 14443 / JCM 21226 / LMG 7866 / NBRC 102419 / NCTC 12128 / CDC 0568-73).